The sequence spans 295 residues: uncharacterized protein (295 aa).

The protein belongs to the NAD(P)-dependent epimerase/dehydratase family.

This is an uncharacterized protein from Schizosaccharomyces pombe (strain 972 / ATCC 24843) (Fission yeast).